A 142-amino-acid polypeptide reads, in one-letter code: HTH-type transcriptional regulator MntR (142 aa).

An HTH dtxR-type domain is found at 1–63; it reads MPTPSMEDYI…YEKYRGLVLT (63 aa). Mn(2+) is bound by residues aspartate 8, glutamate 11, histidine 77, glutamate 99, glutamate 102, and histidine 103.

It belongs to the DtxR/MntR family. In terms of assembly, homodimer.

The protein resides in the cytoplasm. DNA binding is strongly activated by Mn(2+). Central regulator of manganese homeostasis. In Bacillus cereus (strain ATCC 14579 / DSM 31 / CCUG 7414 / JCM 2152 / NBRC 15305 / NCIMB 9373 / NCTC 2599 / NRRL B-3711), this protein is HTH-type transcriptional regulator MntR.